The sequence spans 476 residues: MAAVSAHMQDIKIQDQSDDDPYSPNTRDTTSPECHDDEKSEDISIRSSSFSIHNVLRRSGTTAALTMSFRRKSSWRIPNFDDRNTESVSPVVEVNEREISVDDGNSCCSDDTVLSVGNEAPVSNYEEKASQNTHQELTSFKHIQTHLSAISQLSQNMNVAQPLLLRPSPINPNPIMFLNQPLLFQSPILSQDLKGMPNRQTANVISPTFGLNFGMRLKANHETRTRSDENRYSKPEESRDYINQNCLKFSIDNILKADFGRRITDPLHKRKVKTRYEAKPAPAKDTAAFAPKLDEARVPDIKTPDKAGAIDLSKDDSGSNSGSTSGATSGDSPMVWPAWVYCTRYSDRPSSGRSPRTRRPKKPPGDTASNDEKRPRTAFSGPQLARLKHEFAENRYLTERRRQSLAAELGLAEAQIKIWFQNKRAKIKKASGQRNPLALQLMAQGLYNHSTVPLTKEEEELEMKARERERELKNRC.

3 disordered regions span residues 1–43 (MAAV…SEDI), 273–331 (KTRY…TSGD), and 347–381 (DRPS…AFSG). Positions 23 to 32 (SPNTRDTTSP) are enriched in polar residues. Basic and acidic residues-rich tracts occupy residues 33-43 (ECHDDEKSEDI) and 292-305 (KLDE…KTPD). Over residues 318-331 (GSNSGSTSGATSGD) the composition is skewed to low complexity. Residues 372–431 (EKRPRTAFSGPQLARLKHEFAENRYLTERRRQSLAAELGLAEAQIKIWFQNKRAKIKKAS) constitute a DNA-binding region (homeobox).

This sequence belongs to the engrailed homeobox family. In terms of tissue distribution, expressed in the middle silk gland but not in the posterior silk gland during the fourth molt/fifth intermolt period.

It localises to the nucleus. Its function is as follows. This protein might be involved in the compartmentalization of the silk gland. This Bombyx mori (Silk moth) protein is Homeobox protein invected (INV).